Reading from the N-terminus, the 1025-residue chain is Beta-galactosidase (1025 aa).

Positions 105 and 204 each coordinate substrate. Position 204 (aspartate 204) interacts with Na(+). Glutamate 417, histidine 419, and glutamate 462 together coordinate Mg(2+). Residues glutamate 462 and 538–541 (EYAH) each bind substrate. Glutamate 462 acts as the Proton donor in catalysis. Glutamate 538 functions as the Nucleophile in the catalytic mechanism. Asparagine 598 contacts Mg(2+). Positions 602 and 605 each coordinate Na(+). The substrate site is built by asparagine 605 and tryptophan 1003.

The protein belongs to the glycosyl hydrolase 2 family. Homotetramer. It depends on Mg(2+) as a cofactor. The cofactor is Na(+).

The enzyme catalyses Hydrolysis of terminal non-reducing beta-D-galactose residues in beta-D-galactosides.. The sequence is that of Beta-galactosidase from Aeromonas hydrophila subsp. hydrophila (strain ATCC 7966 / DSM 30187 / BCRC 13018 / CCUG 14551 / JCM 1027 / KCTC 2358 / NCIMB 9240 / NCTC 8049).